The chain runs to 275 residues: Tryptophan synthase alpha chain (275 aa).

Residues Glu58 and Asp69 each act as proton acceptor in the active site.

The protein belongs to the TrpA family. Tetramer of two alpha and two beta chains. Ubiquitously expressed at low levels in seedlings, roots, hypocotyls, cotyledons, stems, leaves, inflorescences, flowers, siliques and seeds.

It localises to the cytoplasm. The enzyme catalyses (1S,2R)-1-C-(indol-3-yl)glycerol 3-phosphate + L-serine = D-glyceraldehyde 3-phosphate + L-tryptophan + H2O. The catalysed reaction is (1S,2R)-1-C-(indol-3-yl)glycerol 3-phosphate = indole + D-glyceraldehyde 3-phosphate. Its pathway is amino-acid biosynthesis; L-tryptophan biosynthesis; L-tryptophan from chorismate: step 5/5. The alpha subunit is responsible for the aldol cleavage of indoleglycerol phosphate to indole and glyceraldehyde 3-phosphate. Contributes to the tryptophan-independent indole biosynthesis, and possibly to auxin production. The polypeptide is Tryptophan synthase alpha chain (TRPA1) (Arabidopsis thaliana (Mouse-ear cress)).